The sequence spans 92 residues: Cell division topological specificity factor (92 aa).

It belongs to the MinE family.

In terms of biological role, prevents the cell division inhibition by proteins MinC and MinD at internal division sites while permitting inhibition at polar sites. This ensures cell division at the proper site by restricting the formation of a division septum at the midpoint of the long axis of the cell. The sequence is that of Cell division topological specificity factor from Colwellia psychrerythraea (strain 34H / ATCC BAA-681) (Vibrio psychroerythus).